A 748-amino-acid chain; its full sequence is Ribonucleoprotein PTB-binding 1 (748 aa).

The segment at 1–42 (MAADVSVTHRPPLSPEAEAEAETPETVDRRTPEQELPPLDPE) is disordered. Alanine 2 is subject to N-acetylalanine. Serine 6 and serine 14 each carry phosphoserine. Residue threonine 31 is modified to Phosphothreonine. Positions 45-60 (RKRLEHTERQFRNRRK) match the Nuclear localization signal motif. RRM domains are found at residues 59 to 130 (RKIL…LQPT), 132 to 210 (ALLC…WTDA), and 221 to 299 (RCLC…FCAP). The segment at 307 to 401 (LAALIAAQAT…QSQSQKKPGI (95 aa)) is interaction with PTBP1. Disordered regions lie at residues 390-505 (QSQS…GEPP), 525-647 (SNLA…PLSH), and 672-731 (KAVG…QHSQ). Threonine 469 carries the phosphothreonine modification. Residues serine 480, serine 576, serine 626, and serine 630 each carry the phosphoserine modification. Low complexity predominate over residues 675 to 685 (GSSPMGSSEGL). Phosphoserine is present on residues serine 716 and serine 720. Positions 743 to 746 (KRKR) match the Nuclear localization signal motif.

In terms of assembly, interacts with PTBP1, RAVER2, VCL and ACTN1. Part of a complex containing RAVER1, VCL and ACTN1. Ubiquitous. Detected in aorta, brain, gut, heart, kidney, liver, spleen, uterus and skeletal muscle.

It localises to the nucleus. The protein resides in the cytoplasm. Functionally, cooperates with PTBP1 to modulate regulated alternative splicing events. Promotes exon skipping. Cooperates with PTBP1 to modulate switching between mutually exclusive exons during maturation of the TPM1 pre-mRNA. This is Ribonucleoprotein PTB-binding 1 (Raver1) from Rattus norvegicus (Rat).